The primary structure comprises 94 residues: METVLILCSLLAPVVLASAAEKEKEKDPFYYDYQTLRIGGLVFAVVLFSVGILLILSRRCKCSFNQKPRAPGDEEAQVENLITTNAAEPQKAEN.

The first 17 residues, 1–17 (METVLILCSLLAPVVLA), serve as a signal peptide directing secretion. The Extracellular segment spans residues 18 to 34 (SAAEKEKEKDPFYYDYQ). The helical transmembrane segment at 35 to 57 (TLRIGGLVFAVVLFSVGILLILS) threads the bilayer. At 58–94 (RRCKCSFNQKPRAPGDEEAQVENLITTNAAEPQKAEN) the chain is on the cytoplasmic side.

Belongs to the FXYD family. Regulatory subunit of the sodium/potassium-transporting ATPase which is composed of a catalytic alpha subunit, a non-catalytic beta subunit and an additional regulatory subunit. The regulatory subunit, a member of the FXYD protein family, modulates the enzymatic activity in a tissue- and isoform-specific way by changing affinities of the Na+/K+-ATPase toward Na(+), K(+) or ATP. In terms of tissue distribution, expressed in the neuronal fibers of the medial part of lateral habenula nucleus, thalamus, hypothalamus, stria terminalis, zona incerta, amygdaloid body and cingulum, olfactory bulb, hippocampus, cerebral cortex and cerebellum. In the cerebellum there is a predominant expression pattern in the granule layer of lobules VI-IX of the posterior lobe. Detected in inner ear.

The protein localises to the cell membrane. Its function is as follows. Associates with and regulates the activity of the sodium/potassium-transporting ATPase (NKA) which catalyzes the hydrolysis of ATP coupled with the exchange of Na(+) and K(+) ions across the plasma membrane. Decreases the apparent affinity of the transporter for Na(+). In addition to modulating NKA kinetics, may also function as a regulator of NKA localization to the plasma membrane. In Rattus norvegicus (Rat), this protein is FXYD domain-containing ion transport regulator 6 (Fxyd6).